Here is a 588-residue protein sequence, read N- to C-terminus: Sulfite reductase [NADPH] hemoprotein beta-component (588 aa).

Residues 1-10 are compositionally biased toward basic and acidic residues; it reads MSDKKQKGLE. The interval 1 to 20 is disordered; sequence MSDKKQKGLEWQDNPLSDNE. Cys-443, Cys-449, Cys-488, and Cys-492 together coordinate [4Fe-4S] cluster. Residue Cys-492 coordinates siroheme.

It belongs to the nitrite and sulfite reductase 4Fe-4S domain family. In terms of assembly, alpha(8)-beta(8). The alpha component is a flavoprotein, the beta component is a hemoprotein. Siroheme serves as cofactor. It depends on [4Fe-4S] cluster as a cofactor.

It catalyses the reaction hydrogen sulfide + 3 NADP(+) + 3 H2O = sulfite + 3 NADPH + 4 H(+). It participates in sulfur metabolism; hydrogen sulfide biosynthesis; hydrogen sulfide from sulfite (NADPH route): step 1/1. In terms of biological role, component of the sulfite reductase complex that catalyzes the 6-electron reduction of sulfite to sulfide. This is one of several activities required for the biosynthesis of L-cysteine from sulfate. The chain is Sulfite reductase [NADPH] hemoprotein beta-component from Mannheimia succiniciproducens (strain KCTC 0769BP / MBEL55E).